Reading from the N-terminus, the 485-residue chain is Glutamate--tRNA ligase (485 aa).

Arginine 6 is a binding site for L-glutamate. The 'HIGH' region signature appears at 9 to 19; it reads PSPTGNLHIGT. L-glutamate is bound by residues tyrosine 192 and 210–214; that span reads RGEDH. Residues 248-252 carry the 'KMSKS' region motif; that stretch reads KLSKR. Residue lysine 251 coordinates ATP.

This sequence belongs to the class-I aminoacyl-tRNA synthetase family. Glutamate--tRNA ligase type 1 subfamily. In terms of assembly, monomer. It depends on Does not require zinc. as a cofactor.

The protein resides in the cytoplasm. The enzyme catalyses tRNA(Glu) + L-glutamate + ATP = L-glutamyl-tRNA(Glu) + AMP + diphosphate. Functionally, non-discriminating glutamyl-tRNA synthetase. Catalyzes the attachment of glutamate to tRNA(Glu) in a two-step reaction: glutamate is first activated by ATP to form Glu-AMP and then transferred to the acceptor end of tRNA(Glu). Acylates both tRNA(Glu) and tRNA(Gln) with glutamate, but has 13-fold higher efficiency with tRNA(Glu). In Thermosynechococcus vestitus (strain NIES-2133 / IAM M-273 / BP-1), this protein is Glutamate--tRNA ligase (gltX).